The sequence spans 926 residues: Vacuolar protein sorting-associated protein 39 homolog (926 aa).

Residues 15-306 (PVEVTCLAFQ…MTLCSGARGQ (292 aa)) enclose the CNH domain. The stretch at 590–768 (DETEMARNLN…LFRTLVHPNQ (179 aa)) is one CHCR repeat.

Belongs to the VAM6/VPS39 family. Probable core component of the homotypic fusion and vacuole protein sorting (HOPS) complex consisting of the core class C Vps proteins vps-11, vps-16, vps-18, and which further associates with vps-33.1, vps-39 and vps-41. May interact with lgg-2. Interacts with cuti-1.

It is found in the cytoplasm. The protein resides in the lysosome membrane. The protein localises to the late endosome membrane. It localises to the late endosome. Its subcellular location is the lysosome. Its function is as follows. Plays a role in vesicle-mediated protein trafficking to lysosomal compartments including the endocytic membrane transport and autophagic pathways. Believed to act in part as a component of the putative HOPS endosomal tethering complex which is proposed to be involved in the rab-5-to-rab-7 endosome conversion probably implicating sand-1, and via binding SNAREs and SNARE complexes to mediate tethering and docking events during SNARE-mediated membrane fusion. The HOPS complex is proposed to be recruited to rab-7 on the late endosomal membrane and to regulate late endocytic, phagocytic and autophagic traffic towards lysosomes. Involved in homotypic vesicle fusions between late endosomes and in heterotypic fusions between late endosomes and lysosomes. Required for fusion of endosomes. In association with lgg-2 mediates the tethering of autophagosomes with lysosomes to form autolysosomes. Within the HOPS complex, contributes to the normal development of gut granules in embryonic and adult intestinal cells. This is Vacuolar protein sorting-associated protein 39 homolog from Caenorhabditis elegans.